Consider the following 1059-residue polypeptide: Carbamoyl phosphate synthase large chain (1059 aa).

Residues 1–401 form a carboxyphosphate synthetic domain region; it reads MPKRTDIKKI…SLLKACRSLE (401 aa). Positions 129, 169, 175, 176, 208, 210, 215, 241, 242, 243, 284, and 298 each coordinate ATP. One can recognise an ATP-grasp 1 domain in the interval 133–327; the sequence is KQLMEDLEQP…IAKLAAKIAV (195 aa). Mg(2+)-binding residues include Q284, E298, and N300. Mn(2+) is bound by residues Q284, E298, and N300. The tract at residues 402–546 is oligomerization domain; sequence IGVYHNEMPE…YSTYEWENES (145 aa). Residues 547–929 form a carbamoyl phosphate synthetic domain region; the sequence is IKSEKESVIV…ALYKAFEASY (383 aa). The 191-residue stretch at 671–861 folds into the ATP-grasp 2 domain; that stretch reads EQALKDLNIP…MAQIATKLIL (191 aa). The ATP site is built by R707, S746, L748, E752, G777, V778, H779, S780, Q820, and E832. Mg(2+) contacts are provided by Q820, E832, and N834. Q820, E832, and N834 together coordinate Mn(2+). One can recognise an MGS-like domain in the interval 930–1059; that stretch reads FHLPAFGNVI…ESRGFITQAI (130 aa). Positions 930 to 1059 are allosteric domain; that stretch reads FHLPAFGNVI…ESRGFITQAI (130 aa).

Belongs to the CarB family. Composed of two chains; the small (or glutamine) chain promotes the hydrolysis of glutamine to ammonia, which is used by the large (or ammonia) chain to synthesize carbamoyl phosphate. Tetramer of heterodimers (alpha,beta)4. Mg(2+) serves as cofactor. The cofactor is Mn(2+).

It carries out the reaction hydrogencarbonate + L-glutamine + 2 ATP + H2O = carbamoyl phosphate + L-glutamate + 2 ADP + phosphate + 2 H(+). The enzyme catalyses hydrogencarbonate + NH4(+) + 2 ATP = carbamoyl phosphate + 2 ADP + phosphate + 2 H(+). The protein operates within amino-acid biosynthesis; L-arginine biosynthesis; carbamoyl phosphate from bicarbonate: step 1/1. Its pathway is pyrimidine metabolism; UMP biosynthesis via de novo pathway; (S)-dihydroorotate from bicarbonate: step 1/3. Large subunit of the glutamine-dependent carbamoyl phosphate synthetase (CPSase). CPSase catalyzes the formation of carbamoyl phosphate from the ammonia moiety of glutamine, carbonate, and phosphate donated by ATP, constituting the first step of 2 biosynthetic pathways, one leading to arginine and/or urea and the other to pyrimidine nucleotides. The large subunit (synthetase) binds the substrates ammonia (free or transferred from glutamine from the small subunit), hydrogencarbonate and ATP and carries out an ATP-coupled ligase reaction, activating hydrogencarbonate by forming carboxy phosphate which reacts with ammonia to form carbamoyl phosphate. This chain is Carbamoyl phosphate synthase large chain, found in Streptococcus mutans serotype c (strain ATCC 700610 / UA159).